Reading from the N-terminus, the 132-residue chain is Small ribosomal subunit protein uS8 (132 aa).

The protein belongs to the universal ribosomal protein uS8 family. In terms of assembly, part of the 30S ribosomal subunit. Contacts proteins S5 and S12.

One of the primary rRNA binding proteins, it binds directly to 16S rRNA central domain where it helps coordinate assembly of the platform of the 30S subunit. The protein is Small ribosomal subunit protein uS8 of Rickettsia bellii (strain OSU 85-389).